Consider the following 492-residue polypeptide: Ribose import ATP-binding protein RbsA (492 aa).

2 ABC transporter domains span residues 3-239 and 249-492; these read IEMK…VGRS and AEIR…TGGQ. ATP is bound at residue 35–42; the sequence is GENGAGKS.

It belongs to the ABC transporter superfamily. Ribose importer (TC 3.A.1.2.1) family. In terms of assembly, the complex is composed of an ATP-binding protein (RbsA), two transmembrane proteins (RbsC) and a solute-binding protein (RbsB).

It is found in the cell membrane. The enzyme catalyses D-ribose(out) + ATP + H2O = D-ribose(in) + ADP + phosphate + H(+). Functionally, part of the ABC transporter complex RbsABC involved in ribose import. Responsible for energy coupling to the transport system. The protein is Ribose import ATP-binding protein RbsA of Lactococcus lactis subsp. lactis (strain IL1403) (Streptococcus lactis).